The following is a 161-amino-acid chain: Putative 4-hydroxy-4-methyl-2-oxoglutarate aldolase (161 aa).

Residues 78-81 (GDVI) and Arg-100 each bind substrate. A divalent metal cation is bound at residue Asp-101.

It belongs to the class II aldolase/RraA-like family. As to quaternary structure, homotrimer. A divalent metal cation is required as a cofactor.

The catalysed reaction is 4-hydroxy-4-methyl-2-oxoglutarate = 2 pyruvate. It catalyses the reaction oxaloacetate + H(+) = pyruvate + CO2. Catalyzes the aldol cleavage of 4-hydroxy-4-methyl-2-oxoglutarate (HMG) into 2 molecules of pyruvate. Also contains a secondary oxaloacetate (OAA) decarboxylase activity due to the common pyruvate enolate transition state formed following C-C bond cleavage in the retro-aldol and decarboxylation reactions. The chain is Putative 4-hydroxy-4-methyl-2-oxoglutarate aldolase from Mycobacterium avium (strain 104).